Reading from the N-terminus, the 453-residue chain is Trigger factor (453 aa).

A PPIase FKBP-type domain is found at 171–256; sequence GDRVTISFKG…ATVLEAPQES (86 aa).

This sequence belongs to the FKBP-type PPIase family. Tig subfamily.

It localises to the cytoplasm. The catalysed reaction is [protein]-peptidylproline (omega=180) = [protein]-peptidylproline (omega=0). In terms of biological role, involved in protein export. Acts as a chaperone by maintaining the newly synthesized protein in an open conformation. Functions as a peptidyl-prolyl cis-trans isomerase. In Rhodopseudomonas palustris (strain BisB18), this protein is Trigger factor.